A 596-amino-acid polypeptide reads, in one-letter code: Aspartate--tRNA(Asp/Asn) ligase (596 aa).

Glutamate 175 contributes to the L-aspartate binding site. Residues 199–202 (QQYK) are aspartate. Residues arginine 221 and histidine 454 each contribute to the L-aspartate site. Position 221 to 223 (221 to 223 (RDE)) interacts with ATP. Glutamate 488 lines the ATP pocket. Position 495 (arginine 495) interacts with L-aspartate. 540–543 (GVDR) lines the ATP pocket.

It belongs to the class-II aminoacyl-tRNA synthetase family. Type 1 subfamily. Homodimer.

Its subcellular location is the cytoplasm. The enzyme catalyses tRNA(Asx) + L-aspartate + ATP = L-aspartyl-tRNA(Asx) + AMP + diphosphate. Functionally, aspartyl-tRNA synthetase with relaxed tRNA specificity since it is able to aspartylate not only its cognate tRNA(Asp) but also tRNA(Asn). Reaction proceeds in two steps: L-aspartate is first activated by ATP to form Asp-AMP and then transferred to the acceptor end of tRNA(Asp/Asn). The sequence is that of Aspartate--tRNA(Asp/Asn) ligase from Bartonella bacilliformis (strain ATCC 35685 / KC583 / Herrer 020/F12,63).